The sequence spans 180 residues: NADH-quinone oxidoreductase subunit I (180 aa).

2 consecutive 4Fe-4S ferredoxin-type domains span residues 48–80 and 90–119; these read IVLT…LQKA and EFFR…LTPD. [4Fe-4S] cluster is bound by residues Cys-60, Cys-63, Cys-66, Cys-70, Cys-99, Cys-102, Cys-105, and Cys-109.

It belongs to the complex I 23 kDa subunit family. In terms of assembly, NDH-1 is composed of 13 different subunits. Subunits NuoA, H, J, K, L, M, N constitute the membrane sector of the complex. [4Fe-4S] cluster serves as cofactor.

It localises to the cell inner membrane. The catalysed reaction is a quinone + NADH + 5 H(+)(in) = a quinol + NAD(+) + 4 H(+)(out). In terms of biological role, NDH-1 shuttles electrons from NADH, via FMN and iron-sulfur (Fe-S) centers, to quinones in the respiratory chain. The immediate electron acceptor for the enzyme in this species is believed to be ubiquinone. Couples the redox reaction to proton translocation (for every two electrons transferred, four hydrogen ions are translocated across the cytoplasmic membrane), and thus conserves the redox energy in a proton gradient. In Sodalis glossinidius (strain morsitans), this protein is NADH-quinone oxidoreductase subunit I.